The primary structure comprises 362 residues: 3-dehydroquinate synthase (362 aa).

NAD(+) is bound by residues 71 to 76 (DGEKYK), 105 to 109 (GVIGD), 129 to 130 (TT), K142, and K151. E184, H248, and H265 together coordinate Zn(2+).

This sequence belongs to the sugar phosphate cyclases superfamily. Dehydroquinate synthase family. Co(2+) is required as a cofactor. The cofactor is Zn(2+). It depends on NAD(+) as a cofactor.

Its subcellular location is the cytoplasm. The enzyme catalyses 7-phospho-2-dehydro-3-deoxy-D-arabino-heptonate = 3-dehydroquinate + phosphate. It functions in the pathway metabolic intermediate biosynthesis; chorismate biosynthesis; chorismate from D-erythrose 4-phosphate and phosphoenolpyruvate: step 2/7. Catalyzes the conversion of 3-deoxy-D-arabino-heptulosonate 7-phosphate (DAHP) to dehydroquinate (DHQ). In Hamiltonella defensa subsp. Acyrthosiphon pisum (strain 5AT), this protein is 3-dehydroquinate synthase.